The primary structure comprises 873 residues: Leucine--tRNA ligase (873 aa).

Residues 42-52 carry the 'HIGH' region motif; that stretch reads PYPSGKLHMGH. The tract at residues 624–643 is disordered; it reads PVEIGGTEKMSKSKNNGVDP. A 'KMSKS' region motif is present at residues 632–636; sequence KMSKS. K635 lines the ATP pocket.

This sequence belongs to the class-I aminoacyl-tRNA synthetase family.

Its subcellular location is the cytoplasm. The enzyme catalyses tRNA(Leu) + L-leucine + ATP = L-leucyl-tRNA(Leu) + AMP + diphosphate. This chain is Leucine--tRNA ligase, found in Pseudomonas aeruginosa (strain ATCC 15692 / DSM 22644 / CIP 104116 / JCM 14847 / LMG 12228 / 1C / PRS 101 / PAO1).